The following is a 251-amino-acid chain: Orcokinin peptides type A (251 aa).

Positions 1-20 are cleaved as a signal peptide; sequence MTAQMFTIALLLSLSAIAAA. 3 consecutive propeptides follow at residues 21–46, 225–231, and 249–251; these read GTIKTAPARTPSTQDDASFPPDGAPV, DYDVFPD, and NVE.

The protein belongs to the orcokinin family.

Its subcellular location is the secreted. In terms of biological role, myotropic peptides that enhance both the frequency and amplitude of spontaneous hindgut contractions. This chain is Orcokinin peptides type A, found in Procambarus clarkii (Red swamp crayfish).